Here is a 135-residue protein sequence, read N- to C-terminus: Bacilliredoxin CHU_0972 (135 aa).

Belongs to the bacilliredoxin family.

The chain is Bacilliredoxin CHU_0972 from Cytophaga hutchinsonii (strain ATCC 33406 / DSM 1761 / CIP 103989 / NBRC 15051 / NCIMB 9469 / D465).